Here is a 232-residue protein sequence, read N- to C-terminus: 7-cyano-7-deazaguanine synthase (232 aa).

8-18 serves as a coordination point for ATP; the sequence is FSGGQDSTTCL. Positions 188, 197, 200, and 203 each coordinate Zn(2+).

The protein belongs to the QueC family. It depends on Zn(2+) as a cofactor.

The enzyme catalyses 7-carboxy-7-deazaguanine + NH4(+) + ATP = 7-cyano-7-deazaguanine + ADP + phosphate + H2O + H(+). It participates in purine metabolism; 7-cyano-7-deazaguanine biosynthesis. Functionally, catalyzes the ATP-dependent conversion of 7-carboxy-7-deazaguanine (CDG) to 7-cyano-7-deazaguanine (preQ(0)). The protein is 7-cyano-7-deazaguanine synthase of Buchnera aphidicola subsp. Schizaphis graminum (strain Sg).